The chain runs to 415 residues: Glutamyl-tRNA reductase (415 aa).

Substrate is bound by residues 49–52 (TCNR), Ser104, 109–111 (EPQ), and Gln115. The active-site Nucleophile is Cys50. NADP(+) is bound at residue 184-189 (GAGEMI).

The protein belongs to the glutamyl-tRNA reductase family. Homodimer.

The catalysed reaction is (S)-4-amino-5-oxopentanoate + tRNA(Glu) + NADP(+) = L-glutamyl-tRNA(Glu) + NADPH + H(+). It functions in the pathway porphyrin-containing compound metabolism; protoporphyrin-IX biosynthesis; 5-aminolevulinate from L-glutamyl-tRNA(Glu): step 1/2. Catalyzes the NADPH-dependent reduction of glutamyl-tRNA(Glu) to glutamate 1-semialdehyde (GSA). In Neisseria meningitidis serogroup C (strain 053442), this protein is Glutamyl-tRNA reductase.